We begin with the raw amino-acid sequence, 482 residues long: Transcription initiation factor IIE subunit alpha (482 aa).

In terms of domain architecture, HTH TFE/IIEalpha-type spans 9 to 99; that stretch reads VKNLLKFVVR…KYPHAIDAIK (91 aa). The C4-type zinc-finger motif lies at 124 to 152; that stretch reads CPICLTKYTQLEAVQLLNFDRTEFLCSLC. Residues 274 to 286 are compositionally biased toward basic and acidic residues; it reads RELQERQAEEKRK. 2 disordered regions span residues 274–295 and 321–482; these read RELQERQAEEKRKQNAVPEWHK and AMDS…FEDV. Over residues 321–345 the composition is skewed to polar residues; the sequence is AMDSINPDNEPAQETSYQNNRTLTE. A compositionally biased stretch (acidic residues) spans 374-401; the sequence is EEEEEEEEEEDEEEEEEEEMEDVMDDND. Residues 419–432 show a composition bias toward polar residues; the sequence is TAGTAKTESNTSND. The segment covering 433–444 has biased composition (basic and acidic residues); sequence VKQESINDKTED. Over residues 464-482 the composition is skewed to acidic residues; the sequence is GDDDDDDDDDEMDIEFEDV.

This sequence belongs to the TFIIE alpha subunit family. In terms of assembly, TFIIE is a tetramer of two alpha (TFA1) and two beta (TFA2) subunits.

Its subcellular location is the nucleus. Functionally, recruits TFIIH to the initiation complex and stimulates the RNA polymerase II C-terminal domain kinase and DNA-dependent ATPase activities of TFIIH. Both TFIIH and TFIIE are required for promoter clearance by RNA polymerase. The protein is Transcription initiation factor IIE subunit alpha (TFA1) of Saccharomyces cerevisiae (strain ATCC 204508 / S288c) (Baker's yeast).